The primary structure comprises 292 residues: 4-diphosphocytidyl-2-C-methyl-D-erythritol kinase (292 aa).

Residue lysine 10 is part of the active site. An ATP-binding site is contributed by 100 to 110 (PIGSGLGGGSS). Aspartate 142 is a catalytic residue.

It belongs to the GHMP kinase family. IspE subfamily. Homodimer.

The catalysed reaction is 4-CDP-2-C-methyl-D-erythritol + ATP = 4-CDP-2-C-methyl-D-erythritol 2-phosphate + ADP + H(+). Its pathway is isoprenoid biosynthesis; isopentenyl diphosphate biosynthesis via DXP pathway; isopentenyl diphosphate from 1-deoxy-D-xylulose 5-phosphate: step 3/6. Catalyzes the phosphorylation of the position 2 hydroxy group of 4-diphosphocytidyl-2C-methyl-D-erythritol. In Buchnera aphidicola subsp. Schizaphis graminum (strain Sg), this protein is 4-diphosphocytidyl-2-C-methyl-D-erythritol kinase.